We begin with the raw amino-acid sequence, 232 residues long: Vesicle transport through interaction with t-SNAREs homolog 1B (232 aa).

A2 is modified (N-acetylalanine). Interaction with CLINT1 regions lie at residues 2 to 23 (ATSA…GLHE) and 69 to 73 (APLSF). The Cytoplasmic portion of the chain corresponds to 2 to 208 (ATSAASSEHF…SRKVTTNKLL (207 aa)). Residues 35-98 (MAGTEEKKKL…AKLHREVRST (64 aa)) adopt a coiled-coil conformation. Position 103 is a phosphothreonine (T103). R107 carries the omega-N-methylarginine modification. S138 carries the phosphoserine modification. The stretch at 161 to 198 (SEIIEELGEQRDQLERTKSRLVNTSENLSKSRKILRSM) forms a coiled coil. A helical; Anchor for type IV membrane protein membrane pass occupies residues 209–229 (LSIVILLELAILGGLVYYKFL). The Vesicular segment spans residues 230–232 (RRH).

Belongs to the VTI1 family. Forms a SNARE complex with STX7, STX8 and VAMP8 which functions in the homotypic fusion of late endosomes. Component of the SNARE complex composed of STX7, STX8, VAMP7 and VIT1B that is required for heterotypic fusion of late endosomes with lysosomes. May interact with STX17. Interacts with CLINT1.

It localises to the early endosome membrane. The protein resides in the late endosome membrane. It is found in the lysosome membrane. Its subcellular location is the cytoplasmic granule. The protein localises to the recycling endosome membrane. Its function is as follows. V-SNARE that mediates vesicle transport pathways through interactions with t-SNAREs on the target membrane. These interactions are proposed to mediate aspects of the specificity of vesicle trafficking and to promote fusion of the lipid bilayers. May be concerned with increased secretion of cytokines associated with cellular senescence. This chain is Vesicle transport through interaction with t-SNAREs homolog 1B (VTI1B), found in Bos taurus (Bovine).